A 551-amino-acid chain; its full sequence is uncharacterized protein (551 aa).

Residues 1–11 (MRRVSLPNQLN) are compositionally biased toward polar residues. Disordered regions lie at residues 1-22 (MRRVSLPNQLNETRRRSPTRGE) and 523-551 (CDPTVDASGYEPHDQQPQQQQQQQQQAFH). Residues 12–22 (ETRRRSPTRGE) show a composition bias toward basic and acidic residues. The span at 537–551 (QQPQQQQQQQQQAFH) shows a compositional bias: low complexity.

To Synechocystis PCC 6803 sll0335 and to M.tuberculosis Rv2567.

This is an uncharacterized protein from Mycobacterium bovis (strain ATCC BAA-935 / AF2122/97).